The sequence spans 141 residues: Hemoglobin subunit alpha (141 aa).

One can recognise a Globin domain in the interval valine 1–arginine 141. O2 is bound at residue histidine 58. Histidine 87 contributes to the heme b binding site.

This sequence belongs to the globin family. As to quaternary structure, heterotetramer of two alpha chains and two beta chains. As to expression, red blood cells.

Its function is as follows. Involved in oxygen transport from the lung to the various peripheral tissues. The polypeptide is Hemoglobin subunit alpha (HBA) (Psittacula krameri (Rose-ringed parakeet)).